The following is a 735-amino-acid chain: Protein-associating with the carboxyl-terminal domain of ezrin (735 aa).

The N-myristoyl glycine moiety is linked to residue G2. The region spanning 2–245 is the Protein kinase domain; that stretch reads GSENSALKSY…LSTLLSHDFF (244 aa). HEAT repeat units follow at residues 194–249, 285–323, 333–370, and 372–409; these read FGAL…RNDF, LIAS…NAPG, LFQS…HFTQ, and QLKK…LLGP. Position 439 is a phosphoserine (S439). Disordered stretches follow at residues 505 to 545 and 604 to 648; these read LSDV…ASIH and VPLT…GLGL. The segment covering 528-538 has biased composition (acidic residues); that stretch reads WPDWSEPEEPE. The tract at residues 547–735 is interaction with EZR; the sequence is WPREPCDVAE…EELAWEDNNW (189 aa). S701 carries the phosphoserine modification.

It belongs to the protein kinase superfamily. In terms of assembly, interacts with EZR/VIL2 C-terminal domain. May be myristoylated; myristoylation may target it to Golgi compartment.

It is found in the cytoplasm. The protein resides in the golgi apparatus. Its subcellular location is the cell projection. It localises to the lamellipodium. Functionally, may play a role in regulating cell adhesion/migration complexes in migrating cells. This is Protein-associating with the carboxyl-terminal domain of ezrin (Scyl3) from Mus musculus (Mouse).